The following is a 305-amino-acid chain: Methionyl-tRNA formyltransferase (305 aa).

Residue 109–112 (SLLP) coordinates (6S)-5,6,7,8-tetrahydrofolate.

This sequence belongs to the Fmt family.

The catalysed reaction is L-methionyl-tRNA(fMet) + (6R)-10-formyltetrahydrofolate = N-formyl-L-methionyl-tRNA(fMet) + (6S)-5,6,7,8-tetrahydrofolate + H(+). Its function is as follows. Attaches a formyl group to the free amino group of methionyl-tRNA(fMet). The formyl group appears to play a dual role in the initiator identity of N-formylmethionyl-tRNA by promoting its recognition by IF2 and preventing the misappropriation of this tRNA by the elongation apparatus. In Roseobacter denitrificans (strain ATCC 33942 / OCh 114) (Erythrobacter sp. (strain OCh 114)), this protein is Methionyl-tRNA formyltransferase.